The following is a 246-amino-acid chain: MLLIPAIDLKDGKCVRLKQGRMEDDTVFSEDPVAVASHWVERGARRLHLVDLNGAFAGEPVNGDIVKAIAKAHPDLPIQIGGGIRSPEIIQAYLDAGVQWVIIGTKAVNEPAFVKAMCEQFPGHIIVGLDAKDGKVATDGWANVTDVDVIDLAKQFENDGVSAIVYTDISRDGMLQGVNVDATVRLAQSMSIPVIASGGITNLDDVRNLCAVADQGISGAITGRAIYENTLDFADGQALSDELSGA.

The active-site Proton acceptor is aspartate 8. The active-site Proton donor is the aspartate 130.

This sequence belongs to the HisA/HisF family.

The protein resides in the cytoplasm. It catalyses the reaction 1-(5-phospho-beta-D-ribosyl)-5-[(5-phospho-beta-D-ribosylamino)methylideneamino]imidazole-4-carboxamide = 5-[(5-phospho-1-deoxy-D-ribulos-1-ylimino)methylamino]-1-(5-phospho-beta-D-ribosyl)imidazole-4-carboxamide. It functions in the pathway amino-acid biosynthesis; L-histidine biosynthesis; L-histidine from 5-phospho-alpha-D-ribose 1-diphosphate: step 4/9. The sequence is that of 1-(5-phosphoribosyl)-5-[(5-phosphoribosylamino)methylideneamino] imidazole-4-carboxamide isomerase from Alcanivorax borkumensis (strain ATCC 700651 / DSM 11573 / NCIMB 13689 / SK2).